Reading from the N-terminus, the 662-residue chain is DNA topoisomerase 4 subunit B (662 aa).

Residues Tyr-20, Asn-60, Asp-87, 129 to 135 (GLHGVGI), and Lys-359 each bind ATP. Positions 439–553 (TELFIVEGDS…EGHLYLAKPP (115 aa)) constitute a Toprim domain. Residues Glu-445, Asp-518, and Asp-520 each coordinate Mg(2+).

It belongs to the type II topoisomerase family. ParE type 1 subfamily. In terms of assembly, heterotetramer composed of ParC and ParE. Mg(2+) serves as cofactor. Requires Mn(2+) as cofactor. Ca(2+) is required as a cofactor.

The catalysed reaction is ATP-dependent breakage, passage and rejoining of double-stranded DNA.. In terms of biological role, topoisomerase IV is essential for chromosome segregation. It relaxes supercoiled DNA. Performs the decatenation events required during the replication of a circular DNA molecule. This Rickettsia felis (strain ATCC VR-1525 / URRWXCal2) (Rickettsia azadi) protein is DNA topoisomerase 4 subunit B.